A 419-amino-acid chain; its full sequence is Transcription termination factor Rho (419 aa).

In terms of domain architecture, Rho RNA-BD spans 48-123 (DIFGDGVLEI…LKVNKVNYDK (76 aa)). RNA-binding regions lie at residues 61–66 (GFGFLR), 78–80 (DIY), and 108–110 (ERY). ATP-binding positions include 169 to 174 (GRGQRG), 181 to 186 (KAGKTM), and Arg212. The interval 284 to 288 (VLTGG) is RNA-binding 2.

Belongs to the Rho family. As to quaternary structure, homohexamer. The homohexamer assembles into an open ring structure.

In terms of biological role, facilitates transcription termination by a mechanism that involves Rho binding to the nascent RNA, activation of Rho's RNA-dependent ATPase activity, and release of the mRNA from the DNA template. The protein is Transcription termination factor Rho of Buchnera aphidicola subsp. Baizongia pistaciae (strain Bp).